The sequence spans 378 residues: Ribosomal RNA large subunit methyltransferase G (378 aa).

The protein belongs to the methyltransferase superfamily. RlmG family.

The protein resides in the cytoplasm. It carries out the reaction guanosine(1835) in 23S rRNA + S-adenosyl-L-methionine = N(2)-methylguanosine(1835) in 23S rRNA + S-adenosyl-L-homocysteine + H(+). Its function is as follows. Specifically methylates the guanine in position 1835 (m2G1835) of 23S rRNA. The polypeptide is Ribosomal RNA large subunit methyltransferase G (Shigella dysenteriae serotype 1 (strain Sd197)).